A 769-amino-acid chain; its full sequence is Acetyl-coenzyme A carboxylase carboxyl transferase subunit alpha, chloroplastic (769 aa).

Residues 1–54 (MASISHSSLALGGASSASASDYLRSSSNGVNGVPLKTLGRAVFTTIRRKDLAVT) constitute a chloroplast transit peptide. Positions 132–385 (LENKYRQALK…KIAINENMNE (254 aa)) constitute a CoA carboxyltransferase C-terminal domain. Coiled coils occupy residues 426 to 504 (EAVF…ASSE) and 631 to 744 (KQNQ…SDGS). The segment at 718-769 (GLQEKQDELEKELAAARELAAEESDGSVKEDDDDDEDSSESGKSEMVNPSFA) is disordered. The segment covering 721-732 (EKQDELEKELAA) has biased composition (basic and acidic residues). Over residues 738-756 (AEESDGSVKEDDDDDEDSS) the composition is skewed to acidic residues. Ser-741 carries the phosphoserine modification.

Belongs to the AccA family. Acetyl-CoA carboxylase is a heterohexamer composed of biotin carboxyl carrier protein, biotin carboxylase and two subunits each of ACCase subunit alpha and ACCase plastid-coded subunit beta (accD). As to expression, accumulates in fatty acids synthesizing tissues such as embryos, expanding leaves, flower buds, flowers, and developing siliques.

Its subcellular location is the plastid. The protein resides in the chloroplast inner membrane. The catalysed reaction is N(6)-carboxybiotinyl-L-lysyl-[protein] + acetyl-CoA = N(6)-biotinyl-L-lysyl-[protein] + malonyl-CoA. The protein operates within lipid metabolism; malonyl-CoA biosynthesis; malonyl-CoA from acetyl-CoA: step 1/1. In terms of biological role, component of the acetyl coenzyme A carboxylase (ACC) complex. First, biotin carboxylase catalyzes the carboxylation of biotin on its carrier protein (BCCP) and then the CO(2) group is transferred by the carboxyltransferase to acetyl-CoA to form malonyl-CoA. The polypeptide is Acetyl-coenzyme A carboxylase carboxyl transferase subunit alpha, chloroplastic (CAC3) (Arabidopsis thaliana (Mouse-ear cress)).